Reading from the N-terminus, the 1465-residue chain is MPEQERQITAREGASRKILSKLSLPTRAWEPAMKKSFAFDNVGYEGGLDGLGPSSQVATSTVRILGMTCQSCVKSIEDRISNLKGIISMKVSLEQGSATVKYVPSVVCLQQVCHQIGDMGFEASIAEGKAASWPSRSLPAQEAVVKLRVEGMTCQSCVSSIEGKVRKLQGVVRVKVSLSNQEAVITYQPYLIQPEDLRDHVNDMGFEAAIKSKVAPLSLGPIDIERLQSTNPKRPLSSANQNFNNSETLGHQGSHVVTLQLRIDGMHCKSCVLNIEENIGQLLGVQSIQVSLENKTAQVKYDPSCTSPVALQRAIEALPPGNFKVSLPDGAEGSGTDHRSSSSHSPGSPPRNQVQGTCSTTLIAIAGMTCASCVHSIEGMISQLEGVQQISVSLAEGTATVLYNPSVISPEELRAAIEDMGFEASVVSESCSTNPLGNHSAGNSMVQTTDGTPTSVQEVAPHTGRLPANHAPDILAKSPQSTRAVAPQKCFLQIKGMTCASCVSNIERNLQKEAGVLSVLVALMAGKAEIKYDPEVIQPLEIAQFIQDLGFEAAVMEDYAGSDGNIELTITGMTCASCVHNIESKLTRTNGITYASVALATSKALVKFDPEIIGPRDIIKIIEEIGFHASLAQRNPNAHHLDHKMEIKQWKKSFLCSLVFGIPVMALMIYMLIPSNEPHQSMVLDHNIIPGLSILNLIFFILCTFVQLLGGWYFYVQAYKSLRHRSANMDVLIVLATSIAYVYSLVILVVAVAEKAERSPVTFFDTPPMLFVFIALGRWLEHLAKSKTSEALAKLMSLQATEATVVTLGEDNLIIREEQVPMELVQRGDIVKVVPGGKFPVDGKVLEGNTMADESLITGEAMPVTKKPGSTVIAGSINAHGSVLIKATHVGNDTTLAQIVKLVEEAQMSKAPIQQLADRFSGYFVPFIIIMSTLTLVVWIVIGFIDFGVVQRYFPNPNKHISQTEVIIRFAFQTSITVLCIACPCSLGLATPTAVMVGTGVAAQNGILIKGGKPLEMAHKIKTVMFDKTGTITHGVPRVMRVLLLGDVATLPLRKVLAVVGTAEASSEHPLGVAVTKYCKEELGTETLGYCTDFQAVPGCGIGCKVSNVEGILAHSERPLSAPASHLNEAGSLPAEKDAVPQTFSVLIGNREWLRRNGLTISSDVSDAMTDHEMKGQTAILVAIDGVLCGMIAIADAVKQEAALAVHTLQSMGVDVVLITGDNRKTARAIATQVGINKVFAEVLPSHKVAKVQELQNKGKKVAMVGDGVNDSPALAQADMGVAIGTGTDVAIEAADVVLIRNDLLDVVASIHLSKRTVRRIRINLVLALIYNLVGIPIAAGVFMPIGIVLQPWMGSAAMAASSVSVVLSSLQLKCYKKPDLERYEAQAHGHMKPLTASQVSVHIGMDDRWRDSPRATPWDQVSYVSQVSLSSLTSDKPSRHSAAADDDGDKWSLLLNGRDEEQYI.

Residues 1 to 653 (MPEQERQITA…KMEIKQWKKS (653 aa)) lie on the Cytoplasmic side of the membrane. Serine 23 bears the Phosphoserine mark. HMA domains lie at 58–124 (ATST…FEAS) and 143–209 (AVVK…FEAA). Cysteine 69, cysteine 72, cysteine 154, and cysteine 157 together coordinate Cu(+). The disordered stretch occupies residues 230 to 249 (TNPKRPLSSANQNFNNSETL). HMA domains follow at residues 257–323 (VTLQ…PGNF) and 359–425 (STTL…FEAS). 2 residues coordinate Cu(+): cysteine 268 and cysteine 271. The disordered stretch occupies residues 322-355 (NFKVSLPDGAEGSGTDHRSSSSHSPGSPPRNQVQ). Residues cysteine 370 and cysteine 373 each coordinate Cu(+). Residues serine 478 and serine 481 each carry the phosphoserine modification. HMA domains are found at residues 488 to 554 (QKCF…FEAA) and 564 to 630 (GNIE…FHAS). Cu(+)-binding residues include cysteine 499, cysteine 502, cysteine 575, and cysteine 578. The helical transmembrane segment at 654–675 (FLCSLVFGIPVMALMIYMLIPS) threads the bilayer. At 676–697 (NEPHQSMVLDHNIIPGLSILNL) the chain is on the extracellular side. Residues 698–717 (IFFILCTFVQLLGGWYFYVQ) traverse the membrane as a helical segment. Residues 718-724 (AYKSLRH) lie on the Cytoplasmic side of the membrane. Residues 725–745 (RSANMDVLIVLATSIAYVYSL) form a helical membrane-spanning segment. At 746-764 (VILVVAVAEKAERSPVTFF) the chain is on the extracellular side. A helical transmembrane segment spans residues 765–785 (DTPPMLFVFIALGRWLEHLAK). Over 786–919 (SKTSEALAKL…KAPIQQLADR (134 aa)) the chain is Cytoplasmic. A helical transmembrane segment spans residues 920–942 (FSGYFVPFIIIMSTLTLVVWIVI). The Extracellular segment spans residues 943–972 (GFIDFGVVQRYFPNPNKHISQTEVIIRFAF). The helical transmembrane segment at 973 to 994 (QTSITVLCIACPCSLGLATPTA) threads the bilayer. Residues 995 to 1322 (VMVGTGVAAQ…LSKRTVRRIR (328 aa)) are Cytoplasmic-facing. The active-site 4-aspartylphosphate intermediate is the aspartate 1027. Mg(2+)-binding residues include aspartate 1267 and aspartate 1271. Residues 1323 to 1340 (INLVLALIYNLVGIPIAA) traverse the membrane as a helical segment. Residues 1341–1351 (GVFMPIGIVLQ) are Extracellular-facing. Residues 1352–1371 (PWMGSAAMAASSVSVVLSSL) traverse the membrane as a helical segment. Residues 1372 to 1465 (QLKCYKKPDL…LNGRDEEQYI (94 aa)) are Cytoplasmic-facing. A Phosphoserine modification is found at serine 1398.

This sequence belongs to the cation transport ATPase (P-type) (TC 3.A.3) family. Type IB subfamily. As to quaternary structure, monomer. Interacts with COMMD1/MURR1. Interacts with DCTN4, in a copper-dependent manner. Interacts with ATOX1. Interacts (via C-terminus) with ZBTB16/PLZF. Post-translationally, isoform 1 may be proteolytically cleaved at the N-terminus to produce the WND/140 kDa form. In terms of tissue distribution, most abundant in liver and kidney and also found in brain. Isoform 2 is expressed in brain but not in liver. The cleaved form WND/140 kDa is found in liver cell lines and other tissues.

The protein localises to the golgi apparatus. It is found in the trans-Golgi network membrane. The protein resides in the late endosome. Its subcellular location is the golgi apparatus membrane. It localises to the cytoplasm. The protein localises to the mitochondrion. The enzyme catalyses Cu(+)(in) + ATP + H2O = Cu(+)(out) + ADP + phosphate + H(+). Functionally, copper ion transmembrane transporter involved in the export of copper out of the cells. It is involved in copper homeostasis in the liver, where it ensures the efflux of copper from hepatocytes into the bile in response to copper overload. In Homo sapiens (Human), this protein is Copper-transporting ATPase 2 (ATP7B).